The sequence spans 132 residues: MKYLFTILLIFICKYGYTFVSNPLLYPFPNDTKIIIHSEGNGKIKKGILKITNPGESPWIVQSWTEGSEGKKTAVYPALARIEAKSSLVLKIYPQPNDKDKSEWMVVLFIPPDSLRKPSELTIPIAYRLKII.

In Escherichia coli, this protein is Protein FasE (fasE).